The primary structure comprises 394 residues: Elongation factor Tu 1 (394 aa).

The tr-type G domain maps to Lys-10–Glu-204. The G1 stretch occupies residues Gly-19–Thr-26. GTP is bound at residue Gly-19–Thr-26. Thr-26 is a binding site for Mg(2+). The interval Gly-60 to Asn-64 is G2. The G3 stretch occupies residues Asp-81–Gly-84. GTP contacts are provided by residues Asp-81–His-85 and Asn-136–Asp-139. The interval Asn-136–Asp-139 is G4. Residues Ser-174–Leu-176 are G5.

This sequence belongs to the TRAFAC class translation factor GTPase superfamily. Classic translation factor GTPase family. EF-Tu/EF-1A subfamily. As to quaternary structure, monomer.

It is found in the cytoplasm. It catalyses the reaction GTP + H2O = GDP + phosphate + H(+). GTP hydrolase that promotes the GTP-dependent binding of aminoacyl-tRNA to the A-site of ribosomes during protein biosynthesis. This Shewanella oneidensis (strain ATCC 700550 / JCM 31522 / CIP 106686 / LMG 19005 / NCIMB 14063 / MR-1) protein is Elongation factor Tu 1.